Reading from the N-terminus, the 82-residue chain is MVFLLCFFLVADVSYGINGDCELPKVVGPCRAGFRRYYYNSSSKRCEKFIYGGCRGNANNFHTLEECEKVCGVRSRDSPKEN.

The signal sequence occupies residues 1–16 (MVFLLCFFLVADVSYG). Residues 21–71 (CELPKVVGPCRAGFRRYYYNSSSKRCEKFIYGGCRGNANNFHTLEECEKVC) enclose the BPTI/Kunitz inhibitor domain. 3 disulfide bridges follow: Cys-21/Cys-71, Cys-30/Cys-54, and Cys-46/Cys-67. The propeptide occupies 76–82 (RDSPKEN).

Belongs to the venom Kunitz-type family. Sea anemone type 2 potassium channel toxin subfamily.

It is found in the secreted. The protein localises to the nematocyst. In terms of biological role, serine protease inhibitor that inhibits both tissue and plasma kallikreins. Has hemolytic activity. Inhibits voltage-gated potassium channels (Kv). This Anemonia viridis (Snakelocks anemone) protein is U-actitoxin-Avd3i.